A 133-amino-acid polypeptide reads, in one-letter code: uncharacterized protein (133 aa).

An N-terminal signal peptide occupies residues 1-22 (MYRSSISIQVFICVLFLPLDSG). N111 carries an N-linked (GlcNAc...) asparagine glycan.

Its subcellular location is the secreted. This is an uncharacterized protein from Saccharomyces cerevisiae (strain ATCC 204508 / S288c) (Baker's yeast).